A 375-amino-acid polypeptide reads, in one-letter code: 23S rRNA (uracil(747)-C(5))-methyltransferase RlmC (375 aa).

[4Fe-4S] cluster contacts are provided by cysteine 3, cysteine 11, cysteine 14, and cysteine 87. Residues glutamine 212, phenylalanine 241, glutamate 262, and asparagine 307 each coordinate S-adenosyl-L-methionine. The active-site Nucleophile is cysteine 334.

The protein belongs to the class I-like SAM-binding methyltransferase superfamily. RNA M5U methyltransferase family. RlmC subfamily.

It catalyses the reaction uridine(747) in 23S rRNA + S-adenosyl-L-methionine = 5-methyluridine(747) in 23S rRNA + S-adenosyl-L-homocysteine + H(+). Catalyzes the formation of 5-methyl-uridine at position 747 (m5U747) in 23S rRNA. This is 23S rRNA (uracil(747)-C(5))-methyltransferase RlmC from Shigella flexneri serotype 5b (strain 8401).